A 239-amino-acid polypeptide reads, in one-letter code: Small ribosomal subunit protein uS3 (239 aa).

Residues 39 to 109 (IRAMIQEIPE…KVQIKIKEVK (71 aa)) form the KH type-2 domain. Residues 219 to 239 (GALLKKQRRPRTEKPAQAGRQ) are disordered.

Belongs to the universal ribosomal protein uS3 family. Part of the 30S ribosomal subunit. Forms a tight complex with proteins S10 and S14.

Functionally, binds the lower part of the 30S subunit head. Binds mRNA in the 70S ribosome, positioning it for translation. This is Small ribosomal subunit protein uS3 from Treponema denticola (strain ATCC 35405 / DSM 14222 / CIP 103919 / JCM 8153 / KCTC 15104).